The following is a 150-amino-acid chain: 3-dehydroquinate dehydratase (150 aa).

Y26 functions as the Proton acceptor in the catalytic mechanism. The substrate site is built by N77, H83, and D90. H103 (proton donor) is an active-site residue. Substrate contacts are provided by residues 104-105 (LS) and R114.

This sequence belongs to the type-II 3-dehydroquinase family. In terms of assembly, homododecamer.

It carries out the reaction 3-dehydroquinate = 3-dehydroshikimate + H2O. Its pathway is metabolic intermediate biosynthesis; chorismate biosynthesis; chorismate from D-erythrose 4-phosphate and phosphoenolpyruvate: step 3/7. In terms of biological role, catalyzes a trans-dehydration via an enolate intermediate. The polypeptide is 3-dehydroquinate dehydratase (Sodalis glossinidius (strain morsitans)).